The following is a 190-amino-acid chain: Jupiter microtubule associated homolog 2 (190 aa).

An N-acetylmethionine modification is found at M1. Residues 1-15 (MFQGADSQAGKSGSR) are compositionally biased toward polar residues. A disordered region spans residues 1 to 190 (MFQGADSQAG…PGGKSSLSFY (190 aa)). Residue K11 is modified to N6-acetyllysine. The residue at position 30 (S30) is a Phosphoserine. Over residues 35 to 44 (ISSSKPNRMA) the composition is skewed to polar residues. A phosphoserine mark is found at S45, S69, and S97. 2 stretches are compositionally biased toward basic and acidic residues: residues 110 to 129 (KPKD…DLKA) and 138 to 153 (EQSD…HAKI). Residue S144 is modified to Phosphoserine.

This sequence belongs to the JUPITER family. Monomer. Dimer. Interacts with TPCN1.

Its subcellular location is the cytoplasm. It is found in the nucleus. Its function is as follows. Nicotinic acid adenine dinucleotide phosphate (NAADP) binding protein required for NAADP-evoked intracellular calcium release. Confers NAADP-sensitivity to the two pore channels (TPCs) complex. Enables NAADP to activate Ca(2+) release from the endoplasmic reticulum through ryanodine receptors. The chain is Jupiter microtubule associated homolog 2 from Mus musculus (Mouse).